The following is a 362-amino-acid chain: Homeobox-leucine zipper protein HOX11 (362 aa).

The span at 27-45 (REEAAEAGRRDHEVRRELE) shows a compositional bias: basic and acidic residues. A disordered region spans residues 27-179 (REEAAEAGRR…DDGGSARKKL (153 aa)). Positions 64 to 75 (LTLLPMVPGLGL) are enriched in low complexity. Over residues 126 to 135 (LSSSPNNSAG) the composition is skewed to polar residues. Over residues 145–160 (HGLGGNDAAPGGGGGD) the composition is skewed to gly residues. Residues 174–233 (SARKKLRLSKEQSAFLEESFKEHSTLNPKQKLALAKQLNLRPRQVEVWFQNRRARTKLKQ) constitute a DNA-binding region (homeobox). Positions 232–276 (KQTEVDCEYLKRCCETLTEENRRLQKELAELRALKTVHPFYMHLP) are leucine-zipper. A disordered region spans residues 301 to 330 (AATSSTAAPPAAPSSGGIAATSSSAAAAAA).

It belongs to the HD-ZIP homeobox family. Class II subfamily. As to expression, expressed in stems, leaf sheaths and blades and panicles.

Its subcellular location is the nucleus. Functionally, probable transcription factor. In Oryza sativa subsp. japonica (Rice), this protein is Homeobox-leucine zipper protein HOX11 (HOX11).